The chain runs to 107 residues: Rhodocoxin (107 aa).

A 2Fe-2S ferredoxin-type domain is found at 2–106 (PTVTYVHPDG…GLIVRLPEEQ (105 aa)). Residues cysteine 40, cysteine 46, cysteine 49, and cysteine 87 each coordinate [2Fe-2S] cluster.

It belongs to the adrenodoxin/putidaredoxin family. It depends on [2Fe-2S] cluster as a cofactor.

Ferredoxin-type protein which transfers electrons from rhodocoxin reductase to cytochrome CYP116 (ThcB), which is involved in the degradation of thiocarbamate herbicides. The protein is Rhodocoxin (thcC) of Rhodococcus erythropolis (Arthrobacter picolinophilus).